Reading from the N-terminus, the 661-residue chain is Glycogen debranching enzyme (661 aa).

The active-site Nucleophile is the Asp-338. The active-site Proton donor is Glu-373. Residues 460–481 (NQLNGEGNRDGSDRNFSNNHGV) form a disordered region.

It belongs to the glycosyl hydrolase 13 family.

It carries out the reaction Hydrolysis of (1-&gt;6)-alpha-D-glucosidic linkages to branches with degrees of polymerization of three or four glucose residues in limit dextrin.. The protein operates within glycan degradation; glycogen degradation. Removes maltotriose and maltotetraose chains that are attached by 1,6-alpha-linkage to the limit dextrin main chain, generating a debranched limit dextrin. The sequence is that of Glycogen debranching enzyme from Serratia proteamaculans (strain 568).